Here is a 283-residue protein sequence, read N- to C-terminus: ESX-1 secretion-associated protein EspG1 (283 aa).

It belongs to the EspG family. Interacts specifically with ESX-1-dependent PE/PPE proteins. Interacts with PPE68.

It is found in the cytoplasm. Specific chaperone for cognate PE/PPE proteins. Plays an important role in preventing aggregation of PE/PPE dimers. The polypeptide is ESX-1 secretion-associated protein EspG1 (Mycobacterium tuberculosis (strain ATCC 25618 / H37Rv)).